Consider the following 911-residue polypeptide: Protein translocase subunit SecA (911 aa).

ATP contacts are provided by residues glutamine 86, glycine 104–threonine 108, and aspartate 512. Residues cysteine 895, cysteine 897, cysteine 906, and histidine 907 each contribute to the Zn(2+) site.

This sequence belongs to the SecA family. In terms of assembly, monomer and homodimer. Part of the essential Sec protein translocation apparatus which comprises SecA, SecYEG and auxiliary proteins SecDF-YajC and YidC. The cofactor is Zn(2+).

Its subcellular location is the cell inner membrane. The protein localises to the cytoplasm. The enzyme catalyses ATP + H2O + cellular proteinSide 1 = ADP + phosphate + cellular proteinSide 2.. Functionally, part of the Sec protein translocase complex. Interacts with the SecYEG preprotein conducting channel. Has a central role in coupling the hydrolysis of ATP to the transfer of proteins into and across the cell membrane, serving both as a receptor for the preprotein-SecB complex and as an ATP-driven molecular motor driving the stepwise translocation of polypeptide chains across the membrane. In Bordetella bronchiseptica (strain ATCC BAA-588 / NCTC 13252 / RB50) (Alcaligenes bronchisepticus), this protein is Protein translocase subunit SecA.